A 171-amino-acid chain; its full sequence is Glycine cleavage system H protein 4 (171 aa).

Residues 30-112 (FAEVGITDYA…YEAGWIAVIE (83 aa)) form the Lipoyl-binding domain. Position 71 is an N6-lipoyllysine (lysine 71). The tract at residues 139–171 (EKEEEVEVKEEELIETESIEELSEEELGYEENK) is disordered.

Belongs to the GcvH family. In terms of assembly, the glycine cleavage system is composed of four proteins: P, T, L and H. The cofactor is (R)-lipoate.

Its function is as follows. The glycine cleavage system catalyzes the degradation of glycine. The H protein shuttles the methylamine group of glycine from the P protein to the T protein. This Aquifex aeolicus (strain VF5) protein is Glycine cleavage system H protein 4.